We begin with the raw amino-acid sequence, 371 residues long: N-methyl-L-tryptophan oxidase (371 aa).

4 to 34 (DLIVIGSGSVGSAAGYYASQAGLNVLMIDSA) contributes to the FAD binding site. C307 carries the S-8alpha-FAD cysteine modification.

The protein belongs to the MSOX/MTOX family. MTOX subfamily. Monomer. The cofactor is FAD.

It carries out the reaction N(alpha)-methyl-L-tryptophan + O2 + H2O = L-tryptophan + formaldehyde + H2O2. Catalyzes the oxidative demethylation of N-methyl-L-tryptophan. This is N-methyl-L-tryptophan oxidase from Yersinia pseudotuberculosis serotype O:1b (strain IP 31758).